Here is a 438-residue protein sequence, read N- to C-terminus: Anaerobic glycerol-3-phosphate dehydrogenase subunit B (438 aa).

The protein belongs to the anaerobic G-3-P dehydrogenase subunit B family. In terms of assembly, composed of a catalytic GlpA/B dimer and of membrane bound GlpC. FMN is required as a cofactor.

It carries out the reaction a quinone + sn-glycerol 3-phosphate = dihydroxyacetone phosphate + a quinol. Its pathway is polyol metabolism; glycerol degradation via glycerol kinase pathway; glycerone phosphate from sn-glycerol 3-phosphate (anaerobic route): step 1/1. Conversion of glycerol 3-phosphate to dihydroxyacetone. Uses fumarate or nitrate as electron acceptor. This is Anaerobic glycerol-3-phosphate dehydrogenase subunit B from Vibrio vulnificus (strain YJ016).